Consider the following 313-residue polypeptide: Adhesin MafA 1 (313 aa).

Residues Met1–Ala14 form the signal peptide. Residue Cys15 is the site of N-palmitoyl cysteine attachment. The S-diacylglycerol cysteine moiety is linked to residue Cys15. The span at Gly282–Lys298 shows a compositional bias: polar residues. Residues Gly282–Gly313 form a disordered region.

The protein belongs to the MafA family.

The protein localises to the cell outer membrane. The polypeptide is Adhesin MafA 1 (mafA1) (Neisseria meningitidis serogroup C / serotype 2a (strain ATCC 700532 / DSM 15464 / FAM18)).